A 157-amino-acid polypeptide reads, in one-letter code: Transmembrane protein 50A (157 aa).

N-acetylserine is present on Ser2. Ser2 bears the Phosphoserine mark. The next 4 membrane-spanning stretches (helical) occupy residues 26-46 (IAAG…AVIY), 58-78 (ACGV…NGQV), 95-115 (IWLF…MWIL), and 126-146 (IVYP…GGLV).

It belongs to the UPF0220 family.

The protein resides in the membrane. The sequence is that of Transmembrane protein 50A (TMEM50A) from Homo sapiens (Human).